The following is a 451-amino-acid chain: UDP-N-acetylmuramate--L-alanine ligase (451 aa).

110-116 (GTHGKTT) provides a ligand contact to ATP.

Belongs to the MurCDEF family.

It is found in the cytoplasm. It catalyses the reaction UDP-N-acetyl-alpha-D-muramate + L-alanine + ATP = UDP-N-acetyl-alpha-D-muramoyl-L-alanine + ADP + phosphate + H(+). Its pathway is cell wall biogenesis; peptidoglycan biosynthesis. Functionally, cell wall formation. This is UDP-N-acetylmuramate--L-alanine ligase from Francisella tularensis subsp. novicida (strain U112).